A 211-amino-acid chain; its full sequence is Thymidylate kinase (211 aa).

7–14 (GMDGSGKT) is a binding site for ATP.

It belongs to the thymidylate kinase family.

It catalyses the reaction dTMP + ATP = dTDP + ADP. Its function is as follows. Phosphorylation of dTMP to form dTDP in both de novo and salvage pathways of dTTP synthesis. This chain is Thymidylate kinase, found in Mesoplasma florum (strain ATCC 33453 / NBRC 100688 / NCTC 11704 / L1) (Acholeplasma florum).